The primary structure comprises 100 residues: Noncompact myelin-associated protein (100 aa).

Over Met-1–Gly-28 the chain is Extracellular. A helical membrane pass occupies residues Ala-29–Leu-49. The Cytoplasmic portion of the chain corresponds to Lys-50–Arg-100. Residues Thr-58–Arg-100 form a disordered region. Polar residues predominate over residues Pro-77–Ala-87.

Post-translationally, glycosylated. As to expression, expressed in the peripheral nervous system Schwann cells (at protein level).

It localises to the cell membrane. Its function is as follows. Plays a role in myelin formation. The protein is Noncompact myelin-associated protein (Ncmap) of Rattus norvegicus (Rat).